The sequence spans 449 residues: Glutamate--tRNA ligase 2 (449 aa).

Positions 17–27 (PSPTGFLHVGN) match the 'HIGH' region motif. The 'KMSKS' region motif lies at 248 to 252 (ALSKR). Lysine 251 serves as a coordination point for ATP.

This sequence belongs to the class-I aminoacyl-tRNA synthetase family. Glutamate--tRNA ligase type 1 subfamily. Monomer.

The protein resides in the cytoplasm. It carries out the reaction tRNA(Glu) + L-glutamate + ATP = L-glutamyl-tRNA(Glu) + AMP + diphosphate. Functionally, catalyzes the attachment of glutamate to tRNA(Glu) in a two-step reaction: glutamate is first activated by ATP to form Glu-AMP and then transferred to the acceptor end of tRNA(Glu). The protein is Glutamate--tRNA ligase 2 of Jannaschia sp. (strain CCS1).